The sequence spans 159 residues: Transcription elongation factor GreA (159 aa).

Positions 45 to 67 form a coiled coil; it reads NAEYHEARKEQSFVEGKIRELQL.

This sequence belongs to the GreA/GreB family.

Functionally, necessary for efficient RNA polymerase transcription elongation past template-encoded arresting sites. The arresting sites in DNA have the property of trapping a certain fraction of elongating RNA polymerases that pass through, resulting in locked ternary complexes. Cleavage of the nascent transcript by cleavage factors such as GreA or GreB allows the resumption of elongation from the new 3'terminus. GreA releases sequences of 2 to 3 nucleotides. The sequence is that of Transcription elongation factor GreA from Neorickettsia sennetsu (strain ATCC VR-367 / Miyayama) (Ehrlichia sennetsu).